The sequence spans 370 residues: Cyanuric acid amidohydrolase (370 aa).

Residues 1 to 106 (MRTTSVGVFK…TVFTRREVER (106 aa)) form an RU A region. Substrate contacts are provided by residues Arg54 and 85–86 (SG). Positions 115-251 (RLSIGMAHTR…NVVIVLGNSA (137 aa)) are RU B. Lys165 is an active-site residue. Residues Arg197 and 234 to 235 (SA) contribute to the substrate site. The active-site Nucleophile is the Ser234. Positions 257–370 (FEIGHAVMND…PVAVIARLSD (114 aa)) are RU C. Glu302 lines the Mg(2+) pocket. Residues Arg329 and 348-349 (SG) contribute to the substrate site. Mg(2+) is bound by residues Ala351, Gln354, Gly355, Pro356, and Gly359.

Belongs to the cyclic amide hydrolase (CyAH) family. As to quaternary structure, homotetramer.

It carries out the reaction cyanurate + H2O = 1-carboxybiuret + H(+). It participates in xenobiotic degradation; atrazine degradation; biuret from cyanurate: step 1/1. Inhibited by barbituric acid. Its function is as follows. Responsible for the hydrolysis of cyanuric acid, an intermediate formed during catabolism of s-triazine based compounds in herbicides such as atrazine and polymers such as melamine. Catalyzes the hydrolytic opening of the s-triazine ring of cyanuric acid (2,4,6-trihydroxy-s-triazine) to yield carbon dioxide and carboxybiuret, which spontaneously decarboxylates to biuret. The sequence is that of Cyanuric acid amidohydrolase from Bradyrhizobium diazoefficiens (strain JCM 10833 / BCRC 13528 / IAM 13628 / NBRC 14792 / USDA 110).